We begin with the raw amino-acid sequence, 440 residues long: C-terminal-binding protein 1 (440 aa).

NAD(+)-binding positions include serine 100, isoleucine 180–valine 185, aspartate 204, cysteine 237–asparagine 243, threonine 264–arginine 266, and aspartate 290. Arginine 266 is a catalytic residue. The active site involves glutamate 295. Histidine 315 functions as the Proton donor in the catalytic mechanism. An NAD(+)-binding site is contributed by histidine 315 to tryptophan 318. A disordered region spans residues histidine 409–leucine 440. The span at proline 429 to leucine 440 shows a compositional bias: basic and acidic residues.

It belongs to the D-isomer specific 2-hydroxyacid dehydrogenase family. Requires NAD(+) as cofactor.

The protein localises to the nucleus. In terms of biological role, corepressor targeting diverse transcription regulators. Has dehydrogenase activity. This chain is C-terminal-binding protein 1 (ctbp1), found in Xenopus laevis (African clawed frog).